Consider the following 363-residue polypeptide: MLLCSMVAALAALATPAFSCALPHLDLPEDNSGLDIKLDSLSNTRVKATITNKADRPLNLLKFNTFFDDGPTEKVGIFKDGNPIKFDGIMRRIQTFDLPISAFVPISPGESIEREFDIASTSDLTVGGAFDILSEGAIPYAEANQTTLTGAMVFKSNALQLKIDGEMAATVARAIQPLDRRSDVHVCRNSAKRKALMKALRNSAHLAGTAASAAYRNPRKVQEYFHTTDRTAVRSVAARLKAISRESGSTRNGATRYACEDHWNRCEPGVLAYTLPSHNLVVNCPSFYNLPALTNRCHGQDQATTVLHEFAHAPGVHEPFCKDHAYGYRSIRRLSTRLALNNADSFSLFANGRFRRRFRVIST.

The first 19 residues, 1–19 (MLLCSMVAALAALATPAFS), serve as a signal peptide directing secretion. Positions 20 to 181 (CALPHLDLPE…ARAIQPLDRR (162 aa)) are excised as a propeptide. 2 disulfide bridges follow: Cys187–Cys259 and Cys266–Cys284. His308 contacts Zn(2+). Glu309 is an active-site residue. Zn(2+) is bound by residues His312 and Asp323.

This sequence belongs to the peptidase M35 family. Zn(2+) is required as a cofactor.

The protein resides in the secreted. It catalyses the reaction Preferential cleavage of bonds with hydrophobic residues in P1'. Also 3-Asn-|-Gln-4 and 8-Gly-|-Ser-9 bonds in insulin B chain.. Its function is as follows. Secreted metalloproteinase that allows assimilation of proteinaceous substrates. Shows high activities on basic nuclear substrates such as histone and protamine. May be involved in virulence. The polypeptide is Neutral protease 2 homolog MEP7 (MEP7) (Coccidioides posadasii (strain C735) (Valley fever fungus)).